Here is a 156-residue protein sequence, read N- to C-terminus: Small ribosomal subunit protein uS7 (156 aa).

The protein belongs to the universal ribosomal protein uS7 family. As to quaternary structure, part of the 30S ribosomal subunit. Contacts proteins S9 and S11.

Its function is as follows. One of the primary rRNA binding proteins, it binds directly to 16S rRNA where it nucleates assembly of the head domain of the 30S subunit. Is located at the subunit interface close to the decoding center, probably blocks exit of the E-site tRNA. This Cupriavidus metallidurans (strain ATCC 43123 / DSM 2839 / NBRC 102507 / CH34) (Ralstonia metallidurans) protein is Small ribosomal subunit protein uS7.